A 392-amino-acid polypeptide reads, in one-letter code: NADH-quinone oxidoreductase subunit D (392 aa).

Belongs to the complex I 49 kDa subunit family. As to quaternary structure, NDH-1 is composed of 14 different subunits. Subunits NuoB, C, D, E, F, and G constitute the peripheral sector of the complex.

It localises to the cell inner membrane. The enzyme catalyses a quinone + NADH + 5 H(+)(in) = a quinol + NAD(+) + 4 H(+)(out). NDH-1 shuttles electrons from NADH, via FMN and iron-sulfur (Fe-S) centers, to quinones in the respiratory chain. The immediate electron acceptor for the enzyme in this species is believed to be ubiquinone. Couples the redox reaction to proton translocation (for every two electrons transferred, four hydrogen ions are translocated across the cytoplasmic membrane), and thus conserves the redox energy in a proton gradient. In Parvibaculum lavamentivorans (strain DS-1 / DSM 13023 / NCIMB 13966), this protein is NADH-quinone oxidoreductase subunit D.